Consider the following 271-residue polypeptide: MNKSLIIFGIVNITSDSFSDGGRYLAPDAAIAQARKLMAEGADVIDLGPASSNPDAAPVSSDTEIARIAPVLDALKADGIPVSLDSYQPATQAYALSRGVAYLNDIRGFPDAAFYPQLAKSSAKLVVMHSVQDGQADRREAPAGDIMDHIAAFFDARIAALTGAGIKRNRLVLDPGMGFFLGAAPETSLSVLARFDELRLRFDLPVLLSVSRKSFLRALTGRGPGDVGAATLAAELAAAAGGADFIRTHEPRPLRDGLAVLAALKETARIR.

The Pterin-binding domain maps to 1-259; sequence MNKSLIIFGI…EPRPLRDGLA (259 aa). Asn-12 contributes to the 4-aminobenzoate binding site. Residues Asn-12, Phe-18, Ser-51, and Ser-52 each coordinate diphosphate. Mg(2+) is bound at residue Asn-12. Ser-52, Asp-85, Asn-104, Asp-174, Phe-179, Lys-213, and Ser-214 together coordinate 7,8-dihydropteroate. (7,8-dihydropterin-6-yl)methyl diphosphate-binding residues include Asp-85, Asn-104, and Asp-174. Asn-104 and Asp-174 together coordinate 6-hydroxymethyl-7,8-dihydropterin. Lys-213 lines the (7,8-dihydropterin-6-yl)methyl diphosphate pocket. Lys-213 contributes to the 6-hydroxymethyl-7,8-dihydropterin binding site. Arg-247 provides a ligand contact to 4-aminobenzoate. Arg-247 and His-249 together coordinate diphosphate. (7,8-dihydropterin-6-yl)methyl diphosphate is bound at residue 247–249; it reads RTH.

It belongs to the DHPS family. Homodimer. Mg(2+) serves as cofactor.

The enzyme catalyses (7,8-dihydropterin-6-yl)methyl diphosphate + 4-aminobenzoate = 7,8-dihydropteroate + diphosphate. The protein operates within cofactor biosynthesis; tetrahydrofolate biosynthesis; 7,8-dihydrofolate from 2-amino-4-hydroxy-6-hydroxymethyl-7,8-dihydropteridine diphosphate and 4-aminobenzoate: step 1/2. In terms of biological role, catalyzes the condensation of para-aminobenzoate (pABA) with 6-hydroxymethyl-7,8-dihydropterin diphosphate (DHPt-PP) to form 7,8-dihydropteroate (H2Pte), the immediate precursor of folate derivatives. Confers resistance to sulfonamide antibiotics, including sulfamethoxazole (SMX), sulfadiazine and sulfisoxazole. The type II enzyme is stable whereas type I DHPS loses its activity rapidly. The chain is Dihydropteroate synthase type-2 from Escherichia coli.